The sequence spans 584 residues: Alpha-glucosidase MAL12 (584 aa).

Asp214 (nucleophile) is an active-site residue. Glu276 (proton donor) is an active-site residue.

This sequence belongs to the glycosyl hydrolase 13 family.

It catalyses the reaction Hydrolysis of terminal, non-reducing (1-&gt;4)-linked alpha-D-glucose residues with release of alpha-D-glucose.. The polypeptide is Alpha-glucosidase MAL12 (MAL12) (Saccharomyces cerevisiae (strain ATCC 204508 / S288c) (Baker's yeast)).